Consider the following 453-residue polypeptide: Glutamyl-tRNA(Gln) amidotransferase subunit A (453 aa).

Residues Lys-56 and Ser-131 each act as charge relay system in the active site. Ser-155 functions as the Acyl-ester intermediate in the catalytic mechanism.

Belongs to the amidase family. GatA subfamily. As to quaternary structure, heterotrimer of A, B and C subunits.

The enzyme catalyses L-glutamyl-tRNA(Gln) + L-glutamine + ATP + H2O = L-glutaminyl-tRNA(Gln) + L-glutamate + ADP + phosphate + H(+). Functionally, allows the formation of correctly charged Gln-tRNA(Gln) through the transamidation of misacylated Glu-tRNA(Gln) in organisms which lack glutaminyl-tRNA synthetase. The reaction takes place in the presence of glutamine and ATP through an activated gamma-phospho-Glu-tRNA(Gln). The sequence is that of Glutamyl-tRNA(Gln) amidotransferase subunit A from Campylobacter jejuni (strain RM1221).